Consider the following 365-residue polypeptide: Geissoschizine synthase (365 aa).

Cys51 contacts Zn(2+). Asn52 is an NADP(+) binding site. Residues His73, Glu74, Cys104, Cys107, Cys110, Cys118, and Cys169 each coordinate Zn(2+). Residues Leu195, Gly197, Leu198, Ser217, Thr218, Ser219, Lys222, Arg262, Val281, Ala283, Ser305, Thr307, and Arg352 each coordinate NADP(+).

Belongs to the zinc-containing alcohol dehydrogenase family. Class-III subfamily. In terms of assembly, homodimer. Zn(2+) is required as a cofactor. In terms of tissue distribution, mainly expressed in roots and, to a lower level, in leaves.

The enzyme catalyses (19E)-geissoschizine + NADP(+) = 4,21-dehydrogeissoschizine + NADPH. It functions in the pathway alkaloid biosynthesis; ajmaline biosynthesis. Functionally, alcohol dehydrogenase involved in the biosynthesis of ajmaline-type monoterpenoid indole alkaloids (MIAs) natural products, important plant-derived pharmaceuticals used in the therapy of heart disorders. Catalyzes iminium reduction on 4,21-dehydrogeissoschizine to produce 19E-geissoschizine, precursor of vomilenine, an intermediate chemical in the biosynthesis of ajmaline. This chain is Geissoschizine synthase, found in Rauvolfia serpentina (Serpentine wood).